The following is a 471-amino-acid chain: MTDLPASVRWQLWIVAFGFFMQSLDTTIVNTALPSMAKSLGESPLHMHMIIVSYVLTVAVMLPASGWLADRVGVRNIFFTAIVLFTAGSLFCAQASTLDQLVMARVLQGVGGAMMVPVGRLTVMKIVPRDQYMAAMTFVTLPGQVGPLLGPALGGVLVEYASWHWIFLINIPVGIVGAIATLCLMPNYTMQTRRFDLSGFLLLAAGMATLTLALDGQKGLGISPAWLAGLVAVGLCALLLYLWHARGNARALFSLNLFRNRTFSLGLGGSFAGRIGSGMLPFMTPVFLQIGLGFSPFHAGLMMIPMVLGSMGMKRIVVQVVNRFGYRRVLVASTLGLAAVSLLFMFSALAGWYYVLPLVLFLQGMINASRFSSMNTLTLKDLPDDLASSGNSLLSMVMQLSMSIGVTIAGLLLGLYGQQHMSLDAASTHQVFLYTYLSMAAIIALPALIFSRVPDDVGSNTVLRRRNRSGS.

Transmembrane regions (helical) follow at residues 12 to 32 (LWIV…VNTA), 49 to 69 (MIIV…GWLA), 77 to 97 (IFFT…QAST), 102 to 124 (VMAR…LTVM), 138 to 158 (FVTL…GVLV), 165 to 185 (WIFL…LCLM), 195 to 215 (FDLS…LALD), 220 to 240 (LGIS…ALLL), 263 to 283 (FSLG…LPFM), 286 to 306 (VFLQ…MIPM), 329 to 351 (VLVA…ALAG), 393 to 413 (LLSM…GLLL), and 431 to 451 (VFLY…LIFS).

This sequence belongs to the major facilitator superfamily. TCR/Tet family.

The protein resides in the cell inner membrane. The chain is Putative multidrug resistance protein MdtD from Klebsiella pneumoniae subsp. pneumoniae (strain ATCC 700721 / MGH 78578).